Reading from the N-terminus, the 454-residue chain is NADP-specific glutamate dehydrogenase 1 (454 aa).

At S2 the chain carries N-acetylserine. K110 is a catalytic residue. 174 to 203 (GVLTGKGLNWGGSLIRPEATGYGLVYYTQA) lines the NAD(+) pocket. Glycyl lysine isopeptide (Lys-Gly) (interchain with G-Cter in ubiquitin) cross-links involve residues K325, K371, and K433.

This sequence belongs to the Glu/Leu/Phe/Val dehydrogenases family. Homohexamer.

It carries out the reaction L-glutamate + NADP(+) + H2O = 2-oxoglutarate + NH4(+) + NADPH + H(+). Functionally, catalyzes the incorporation of an ammonium ion into alpha-ketoglutarate to form L-glutamate, the major route of assimilation of ammonia into an organic form in yeast. The protein is NADP-specific glutamate dehydrogenase 1 of Saccharomyces cerevisiae (strain ATCC 204508 / S288c) (Baker's yeast).